The following is a 459-amino-acid chain: ERBB receptor feedback inhibitor 1 (459 aa).

An N-acetylserine modification is found at S2. Residues T126 and T130 each carry the phosphothreonine modification. Residues 227–352 (QNRVVPDPNP…VMPPTQSFAP (126 aa)) form a disordered region. Phosphoserine is present on residues S250 and S271. The segment covering 264–273 (SSCTHRASPS) has biased composition (polar residues). Positions 282-291 (PPRVPIPPRP) are enriched in pro residues. Residue S300 is modified to Phosphoserine. Positions 310–323 (DEDRPPKVPPREPL) are enriched in basic and acidic residues. Positions 324 to 335 (SRSNSRTPSPKS) are enriched in polar residues. The tract at residues 332 to 361 (SPKSLPSYLNGVMPPTQSFAPDPKYVSSKA) is interaction with EGFR and ERBB2 and regulation of EGFR activation. S458 is subject to Phosphoserine.

It belongs to the MIG6 family. Interacts with EGFR and ERBB2.

The protein localises to the cytoplasm. It localises to the cell membrane. The protein resides in the nucleus. Negative regulator of EGFR signaling in skin morphogenesis. Acts as a negative regulator for several EGFR family members, including ERBB2, ERBB3 and ERBB4. Inhibits EGFR catalytic activity by interfering with its dimerization. Inhibits autophosphorylation of EGFR, ERBB2 and ERBB4. Important for normal keratinocyte proliferation and differentiation. Plays a role in modulating the response to steroid hormones in the uterus. Required for normal response to progesterone in the uterus and for fertility. Mediates epithelial estrogen responses in the uterus by regulating ESR1 levels and activation. Important for regulation of endometrium cell proliferation. Important for normal prenatal and perinatal lung development. This chain is ERBB receptor feedback inhibitor 1 (Errfi1), found in Rattus norvegicus (Rat).